The sequence spans 90 residues: RNA-binding protein Hfq (90 aa).

Positions 9-68 constitute a Sm domain; the sequence is DPFLNALRRERVPVSIYLVNGIKLQGQVESFDQFVILLKNTVSQMVYKHAISTVVPARPF.

The protein belongs to the Hfq family. As to quaternary structure, homohexamer.

Its function is as follows. RNA chaperone that binds small regulatory RNA (sRNAs) and mRNAs to facilitate mRNA translational regulation in response to envelope stress, environmental stress and changes in metabolite concentrations. Also binds with high specificity to tRNAs. The sequence is that of RNA-binding protein Hfq from Shewanella oneidensis (strain ATCC 700550 / JCM 31522 / CIP 106686 / LMG 19005 / NCIMB 14063 / MR-1).